Reading from the N-terminus, the 359-residue chain is GalNAc-alpha-(1-&gt;4)-GalNAc-alpha-(1-&gt;3)-diNAcBac-PP-undecaprenol alpha-1,4-N-acetyl-D-galactosaminyltransferase (359 aa).

E17 provides a ligand contact to substrate. Residue Y45 participates in UDP-N-acetyl-alpha-D-galactosamine binding. 71-74 contacts substrate; that stretch reads RFKK. UDP-N-acetyl-alpha-D-galactosamine is bound by residues H117, R190, K195, V246, and 266-274; that span reads EGLPTVLIE. R190 is a binding site for substrate.

This sequence belongs to the glycosyltransferase group 1 family.

The protein resides in the cell inner membrane. It carries out the reaction N-acetyl-alpha-D-galactosaminyl-(1-&gt;4)-N-acetyl-alpha-D-galactosaminyl-(1-&gt;3)-N,N'-diacetyl-alpha-D-bacillosaminyl-tri-trans,heptacis-undecaprenyl diphosphate + 3 UDP-N-acetyl-alpha-D-galactosamine = [alpha-D-GalNAc-(1-&gt;4)]4-alpha-D-GalNAc-(1-&gt;3)-alpha-D-diNAcBac-tri-trans,hepta-cis-undecaprenyl diphosphate + 3 UDP + 3 H(+). It functions in the pathway protein modification; protein glycosylation. Its function is as follows. Processive glycosyltransferase that is part of the biosynthetic pathway of the lipid-linked oligosaccharide (LLO) that serves as the glycan donor in bacterial protein N-glycosylation. Catalyzes the transfer of exactly three alpha-(1-&gt;4)-N-acetylgalactosamine (GalNAc) units to the growing LLO precursor, GalNAc-alpha-(1-&gt;4)-GalNAc-alpha-(1-&gt;3)-diNAcBac-PP-undecaprenyl. Cannot accept UDP-GlcNAc as substrate. The chain is GalNAc-alpha-(1-&gt;4)-GalNAc-alpha-(1-&gt;3)-diNAcBac-PP-undecaprenol alpha-1,4-N-acetyl-D-galactosaminyltransferase from Campylobacter jejuni subsp. jejuni serotype O:2 (strain ATCC 700819 / NCTC 11168).